Consider the following 172-residue polypeptide: Large ribosomal subunit protein uL10 (172 aa).

The protein belongs to the universal ribosomal protein uL10 family. Part of the ribosomal stalk of the 50S ribosomal subunit. The N-terminus interacts with L11 and the large rRNA to form the base of the stalk. The C-terminus forms an elongated spine to which L12 dimers bind in a sequential fashion forming a multimeric L10(L12)X complex.

Forms part of the ribosomal stalk, playing a central role in the interaction of the ribosome with GTP-bound translation factors. The protein is Large ribosomal subunit protein uL10 of Brucella suis biovar 1 (strain 1330).